The sequence spans 230 residues: Ribonuclease 3 (230 aa).

An RNase III domain is found at 5–134; it reads NDTISKVINY…LIGAIYIDGG (130 aa). Glu47 is a binding site for Mg(2+). Asp51 is a catalytic residue. Mg(2+) contacts are provided by Asn120 and Glu123. Residue Glu123 is part of the active site. The DRBM domain maps to 159–228; sequence DPKTSLQEWT…AELILEKIKK (70 aa).

The protein belongs to the ribonuclease III family. Homodimer. Mg(2+) is required as a cofactor.

It localises to the cytoplasm. It catalyses the reaction Endonucleolytic cleavage to 5'-phosphomonoester.. In terms of biological role, digests double-stranded RNA. Involved in the processing of primary rRNA transcript to yield the immediate precursors to the large and small rRNAs (23S and 16S). Processes some mRNAs, and tRNAs when they are encoded in the rRNA operon. Processes pre-crRNA and tracrRNA of type II CRISPR loci if present in the organism. This is Ribonuclease 3 from Wolbachia pipientis subsp. Culex pipiens (strain wPip).